A 437-amino-acid chain; its full sequence is GTPase Obg (437 aa).

The 159-residue stretch at 2–160 (SLFLDTARIE…KILLLELRVL (159 aa)) folds into the Obg domain. Residues 161-338 (ADVGLVGFPS…LLARTSELLA (178 aa)) form the OBG-type G domain. Residues 167-174 (GFPSVGKS), 192-196 (FTTIT), 214-217 (DMPG), 284-287 (NKMD), and 319-321 (SGL) contribute to the GTP site. Serine 174 and threonine 194 together coordinate Mg(2+). The OCT domain occupies 359 to 437 (GFEDEEKPFK…IQKFEFEFVD (79 aa)).

It belongs to the TRAFAC class OBG-HflX-like GTPase superfamily. OBG GTPase family. In terms of assembly, monomer. Requires Mg(2+) as cofactor.

The protein resides in the cytoplasm. Functionally, an essential GTPase which binds GTP, GDP and possibly (p)ppGpp with moderate affinity, with high nucleotide exchange rates and a fairly low GTP hydrolysis rate. Plays a role in control of the cell cycle, stress response, ribosome biogenesis and in those bacteria that undergo differentiation, in morphogenesis control. The chain is GTPase Obg from Lactococcus lactis subsp. cremoris (strain SK11).